The primary structure comprises 204 residues: MADPRVEELPDEEVPKTNVEDAGSDSESEAGEESSIPSGAAVTIHSRNEKKARKAIGKLGLKHVPGITRVTLRRPKNILFVINQPDVYRSPTSNTWIIFGEAKIEDLNSQAQASAAQQLAAAEAAAGEHAGHDHDHDHGKGKAPETEAKKEEEEDDGEEVDETGLEAKDIELVMAQANVSRKKAVKALRENDNDIVNSIMALSI.

Residues 1–19 show a composition bias toward basic and acidic residues; the sequence is MADPRVEELPDEEVPKTNV. Disordered stretches follow at residues 1 to 48 and 119 to 167; these read MADP…HSRN and LAAA…GLEA. The segment covering 22 to 32 has biased composition (acidic residues); it reads AGSDSESEAGE. The NAC-A/B domain maps to 46–111; it reads SRNEKKARKA…AKIEDLNSQA (66 aa). Low complexity predominate over residues 119 to 128; the sequence is LAAAEAAAGE. Basic and acidic residues predominate over residues 129-151; that stretch reads HAGHDHDHDHGKGKAPETEAKKE. The segment covering 152–164 has biased composition (acidic residues); the sequence is EEEDDGEEVDETG. In terms of domain architecture, UBA spans 165–204; that stretch reads LEAKDIELVMAQANVSRKKAVKALRENDNDIVNSIMALSI.

It belongs to the NAC-alpha family. As to quaternary structure, part of the nascent polypeptide-associated complex (NAC), consisting of egd2 and egd1. NAC associates with ribosomes via egd1.

It localises to the cytoplasm. It is found in the nucleus. In terms of biological role, component of the nascent polypeptide-associated complex (NAC), a dynamic component of the ribosomal exit tunnel, protecting the emerging polypeptides from interaction with other cytoplasmic proteins to ensure appropriate nascent protein targeting. The NAC complex also promotes mitochondrial protein import by enhancing productive ribosome interactions with the outer mitochondrial membrane and blocks the inappropriate interaction of ribosomes translating non-secretory nascent polypeptides with translocation sites in the membrane of the endoplasmic reticulum. Egd2 may also be involved in transcription regulation. In Aspergillus clavatus (strain ATCC 1007 / CBS 513.65 / DSM 816 / NCTC 3887 / NRRL 1 / QM 1276 / 107), this protein is Nascent polypeptide-associated complex subunit alpha (egd2).